Consider the following 403-residue polypeptide: S-arrestin (403 aa).

Positions 11–19 (HVIFKKVSR) are interaction with RHO. Thr231 is subject to Phosphothreonine. The segment at 381–403 (RQNLKDTGENTEGKKDEDAGQDE) is disordered.

This sequence belongs to the arrestin family. Monomer. Homodimer. Homotetramer. Interacts with RHO (via the phosphorylated C-terminus). As to expression, detected in retina (at protein level).

It localises to the cell projection. Its subcellular location is the cilium. It is found in the photoreceptor outer segment. The protein resides in the membrane. Its function is as follows. Binds to photoactivated, phosphorylated RHO and terminates RHO signaling via G-proteins by competing with G-proteins for the same binding site on RHO. May play a role in preventing light-dependent degeneration of retinal photoreceptor cells. The polypeptide is S-arrestin (Sag) (Mus musculus (Mouse)).